The following is a 554-amino-acid chain: MTSVHTLPDITATPAWDALRKHHDRIGDTHLRQFFEEDPDRGRELTVTVGDLYIDYSKHRVTRETLRLLVDLARTAKLEERRDQMFAGVHINTSEDRAVLHTALRLPRDAELIVDGRNVVADVHEVLDAMGEFTDRLRSGEWTGATGKRISTVVNIGIGGSDLGPVMVYQALRHYADAGISARFVSNVDPADLIATLADLDPATTLFIVASKTFSTLETLTNATAARRWITDALGDAAVAHHFVAVSTNKRLVDDFGINTDNMFGFWDWVGGRYSVDSAIGLSVMAVIGREAFADFLSGFHIVDRHFQTAPLESNAPVLLGLIGLWYSNFMGAQSRAVLPYSNDLARFAAYLQQLTMESNGKSTRADGSPVTTDTGEIFWGEPGTNGQHAFYQLLHQGTRLVPADFIGFSQPIDDLPTAEGSGSMHDLLMSNFFAQTQVLAFGKTAEEIAAEGTPADIVPHKVMPGNRPSTSILANRLTPSVLGQLIALYEHQVFTEGVIWGIDSFDQWGVELGKTQAKALLPVITADNSPAPQSDSSTDALVRRYRSERGRTS.

The active-site Proton donor is the Glu-358. Active-site residues include His-389 and Lys-515. Over residues 527 to 540 the composition is skewed to polar residues; sequence ADNSPAPQSDSSTD. Positions 527–554 are disordered; the sequence is ADNSPAPQSDSSTDALVRRYRSERGRTS. Residues 542–554 are compositionally biased toward basic and acidic residues; the sequence is LVRRYRSERGRTS.

It belongs to the GPI family.

Its subcellular location is the cytoplasm. It carries out the reaction alpha-D-glucose 6-phosphate = beta-D-fructose 6-phosphate. The protein operates within carbohydrate biosynthesis; gluconeogenesis. Its pathway is carbohydrate degradation; glycolysis; D-glyceraldehyde 3-phosphate and glycerone phosphate from D-glucose: step 2/4. Functionally, catalyzes the reversible isomerization of glucose-6-phosphate to fructose-6-phosphate. The protein is Glucose-6-phosphate isomerase of Mycobacterium avium (strain 104).